The chain runs to 1013 residues: Sodium/potassium-transporting ATPase subunit alpha-3 (1013 aa).

The segment covering 1–10 (MGDKKDDKSS) has biased composition (basic and acidic residues). The disordered stretch occupies residues 1-24 (MGDKKDDKSSPKKSKAKERRDLDD). At 1-77 (MGDKKDDKSS…NALTPPPTTP (77 aa)) the chain is on the cytoplasmic side. 2 positions are modified to phosphoserine: S37 and S56. Positions 72–74 (PPP) are interaction with phosphoinositide-3 kinase. A helical transmembrane segment spans residues 78–98 (EWVKFCRQLFGGFSILLWIGA). Residues 99 to 121 (ILCFLAYGIQAGTEDDPSGDNLY) lie on the Extracellular side of the membrane. A helical transmembrane segment spans residues 122–142 (LGIVLAAVVIITGCFSYYQEA). The Cytoplasmic portion of the chain corresponds to 143–278 (KSSKIMESFK…VGKTPIAIEI (136 aa)). S218 and S265 each carry phosphoserine. The chain crosses the membrane as a helical span at residues 279-298 (EHFIQLITGVAVFLGVSFFI). Topologically, residues 299–310 (LSLILGYTWLEA) are extracellular. A helical transmembrane segment spans residues 311–328 (VIFLIGIIVANVPEGLLA). The Cytoplasmic segment spans residues 329-762 (TVTVCLTLTA…EEGRLIFDNL (434 aa)). D366 functions as the 4-aspartylphosphate intermediate in the catalytic mechanism. S442 bears the Phosphoserine mark. Position 548 is a phosphotyrosine (Y548). 2 residues coordinate Mg(2+): D707 and D711. The chain crosses the membrane as a helical span at residues 763–782 (KKSIAYTLTSNIPEITPFLL). Residues 783–792 (FIMANIPLPL) are Extracellular-facing. Residues 793–813 (GTITILCIDLGTDMVPAISLA) traverse the membrane as a helical segment. Over 814–833 (YEAAESDIMKRQPRNPRTDK) the chain is Cytoplasmic. Residues 834–856 (LVNERLISMAYGQIGMIQALGGF) traverse the membrane as a helical segment. At 857-908 (FSYFVILAENGFLPGNLVGIRLNWDDRTVNDLEDSYGQQWTYEQRKVVEFTC) the chain is on the extracellular side. A helical membrane pass occupies residues 909 to 928 (HTAFFVSIVVVQWADLIICK). The Cytoplasmic portion of the chain corresponds to 929-941 (TRRNSVFQQGMKN). S933 carries the phosphoserine; by PKA modification. Residues 942–960 (KILIFGLFEETALAAFLSY) form a helical membrane-spanning segment. Over 961–975 (CPGMDVALRMYPLKP) the chain is Extracellular. The chain crosses the membrane as a helical span at residues 976–996 (SWWFCAFPYSFLIFVYDEIRK). The Cytoplasmic portion of the chain corresponds to 997–1013 (LILRRNPGGWVEKETYY).

The protein belongs to the cation transport ATPase (P-type) (TC 3.A.3) family. Type IIC subfamily. In terms of assembly, the sodium/potassium-transporting ATPase is composed of a catalytic alpha subunit, an auxiliary non-catalytic beta subunit and an additional regulatory subunit. Interacts with regulatory subunit FXYD1.

The protein localises to the cell membrane. The enzyme catalyses K(+)(out) + Na(+)(in) + ATP + H2O = K(+)(in) + Na(+)(out) + ADP + phosphate + H(+). Its function is as follows. This is the catalytic component of the active enzyme, which catalyzes the hydrolysis of ATP coupled with the exchange of sodium and potassium ions across the plasma membrane. This action creates the electrochemical gradient of sodium and potassium ions, providing the energy for active transport of various nutrients. The sequence is that of Sodium/potassium-transporting ATPase subunit alpha-3 (Atp1a3) from Mus musculus (Mouse).